Consider the following 380-residue polypeptide: Probable acyl-CoA dehydrogenase YngJ (380 aa).

FAD is bound by residues 123–132 (FGLTEPNAGS), 156–158 (WIT), arginine 269, and 337–341 (QIHGG). Residue glutamate 364 is the Proton acceptor of the active site. FAD is bound at residue 366–368 (TSE).

It belongs to the acyl-CoA dehydrogenase family. FAD serves as cofactor.

The catalysed reaction is a 2,3-saturated acyl-CoA + A = a 2,3-dehydroacyl-CoA + AH2. This chain is Probable acyl-CoA dehydrogenase YngJ (yngJ), found in Bacillus subtilis (strain 168).